The sequence spans 176 residues: Peptide deformylase (176 aa).

Fe cation-binding residues include Cys97 and His139. The active site involves Glu140. A Fe cation-binding site is contributed by His143.

Belongs to the polypeptide deformylase family. Fe(2+) serves as cofactor.

The enzyme catalyses N-terminal N-formyl-L-methionyl-[peptide] + H2O = N-terminal L-methionyl-[peptide] + formate. In terms of biological role, removes the formyl group from the N-terminal Met of newly synthesized proteins. Requires at least a dipeptide for an efficient rate of reaction. N-terminal L-methionine is a prerequisite for activity but the enzyme has broad specificity at other positions. This is Peptide deformylase from Thermomicrobium roseum (strain ATCC 27502 / DSM 5159 / P-2).